The chain runs to 95 residues: Large ribosomal subunit protein bL27 (95 aa).

A propeptide spanning residues 1 to 10 (MRFILNLQFF) is cleaved from the precursor.

It belongs to the bacterial ribosomal protein bL27 family. In terms of processing, the N-terminus is cleaved by ribosomal processing cysteine protease Prp.

The polypeptide is Large ribosomal subunit protein bL27 (Mesoplasma florum (strain ATCC 33453 / NBRC 100688 / NCTC 11704 / L1) (Acholeplasma florum)).